The sequence spans 296 residues: Probable transcription factor At1g44810 (296 aa).

Residues methionine 1 to asparagine 119 are disordered. Positions glutamate 19–glycine 28 are enriched in acidic residues. Positions threonine 52–asparagine 72 are enriched in polar residues. Basic and acidic residues predominate over residues arginine 97–asparagine 119.

This sequence belongs to the GeBP family.

This is Probable transcription factor At1g44810 from Arabidopsis thaliana (Mouse-ear cress).